Consider the following 107-residue polypeptide: Large ribosomal subunit protein bL21 (107 aa).

It belongs to the bacterial ribosomal protein bL21 family. As to quaternary structure, part of the 50S ribosomal subunit. Contacts protein L20.

This protein binds to 23S rRNA in the presence of protein L20. The protein is Large ribosomal subunit protein bL21 of Chlamydia trachomatis serovar L2 (strain ATCC VR-902B / DSM 19102 / 434/Bu).